The primary structure comprises 257 residues: NAD kinase (257 aa).

Asp46 serves as the catalytic Proton acceptor. NAD(+)-binding positions include 46 to 47, 116 to 117, Asp146, Ala154, 157 to 162, and Asn218; these read DG, NE, and TAYNLS.

It belongs to the NAD kinase family. It depends on a divalent metal cation as a cofactor.

It is found in the cytoplasm. The catalysed reaction is NAD(+) + ATP = ADP + NADP(+) + H(+). In terms of biological role, involved in the regulation of the intracellular balance of NAD and NADP, and is a key enzyme in the biosynthesis of NADP. Catalyzes specifically the phosphorylation on 2'-hydroxyl of the adenosine moiety of NAD to yield NADP. The polypeptide is NAD kinase (Brucella suis biovar 1 (strain 1330)).